The following is a 326-amino-acid chain: Probable cell division protein WhiA (326 aa).

The H-T-H motif DNA-binding region spans 275–308 (SLDELGRLADPVMTKDAIAGRIRRLLAMADKRAL).

This sequence belongs to the WhiA family.

Functionally, involved in cell division and chromosome segregation. The chain is Probable cell division protein WhiA from Pseudarthrobacter chlorophenolicus (strain ATCC 700700 / DSM 12829 / CIP 107037 / JCM 12360 / KCTC 9906 / NCIMB 13794 / A6) (Arthrobacter chlorophenolicus).